Reading from the N-terminus, the 107-residue chain is MIPGEYVLKKEPILCNQNKQTIKIRVLNRGDRPVQVGSHFHFFEVNQSLQFHREKAFGMRLNIPAGTAVRFEPGDAKEVEIIPFSGERKVYGLNNVTNGSVEMGKRK.

It belongs to the urease beta subunit family. In terms of assembly, heterotrimer of UreA (gamma), UreB (beta) and UreC (alpha) subunits. Three heterotrimers associate to form the active enzyme.

It is found in the cytoplasm. It carries out the reaction urea + 2 H2O + H(+) = hydrogencarbonate + 2 NH4(+). It functions in the pathway nitrogen metabolism; urea degradation; CO(2) and NH(3) from urea (urease route): step 1/1. The chain is Urease subunit beta from Bacillus sp. (strain TB-90).